Reading from the N-terminus, the 219-residue chain is dTTP/UTP pyrophosphatase (219 aa).

Asp-79 functions as the Proton acceptor in the catalytic mechanism.

Belongs to the Maf family. YhdE subfamily. The cofactor is a divalent metal cation.

Its subcellular location is the cytoplasm. It carries out the reaction dTTP + H2O = dTMP + diphosphate + H(+). The catalysed reaction is UTP + H2O = UMP + diphosphate + H(+). Its function is as follows. Nucleoside triphosphate pyrophosphatase that hydrolyzes dTTP and UTP. May have a dual role in cell division arrest and in preventing the incorporation of modified nucleotides into cellular nucleic acids. This Oleidesulfovibrio alaskensis (strain ATCC BAA-1058 / DSM 17464 / G20) (Desulfovibrio alaskensis) protein is dTTP/UTP pyrophosphatase.